A 616-amino-acid polypeptide reads, in one-letter code: GPI mannosyltransferase 3 (616 aa).

The Cytoplasmic segment spans residues 1–16 (MAHEVHRIKPKLGRTQ). The chain crosses the membrane as a helical span at residues 17–37 (IFWVFLAFRVLNAVLTRTFFQ). At 38 to 86 (ADEFWQALEPAHWKAFKYGELTWEWKFGVRSYLFPMIFELTYRLVSLSS) the chain is on the lumenal side. Residues 87 to 107 (ILLHYALLLLSTIGSDLLILL) form a helical membrane-spanning segment. Over 108–136 (LPKYELSWQVAEDLKRLPFDVTRSFEYYG) the chain is Cytoplasmic. A helical membrane pass occupies residues 137–157 (VIYAPKIVMAVLASIGEYYIV). The Lumenal segment spans residues 158-188 (RFVQKLYLLTLDKRNEKEEEERRSGLSEITK). A helical transmembrane segment spans residues 189–209 (FALLLSLTNFFNCFFITRTFI). The Cytoplasmic portion of the chain corresponds to 210–240 (NSFEMILTSIALYYWDWTGGQMIKESSFTKS). A helical transmembrane segment spans residues 241 to 261 (LIFAFLACLQRPSSGLIWVIP). The Lumenal segment spans residues 262-278 (SISLILNLVGKKQYHLL). Residues 279–299 (FITFSKVLRSFFLVFTANAII) traverse the membrane as a helical segment. Residues 300–338 (DMYFYEKVTFPFFRFLKFNFTTPLSKFYGVAPWHFHFFQ) are Cytoplasmic-facing. Residues 339 to 359 (SLPIVLGASIPAFAFGLFFPL) form a helical membrane-spanning segment. Residues 360 to 392 (SKRSFPKKYLNPFFQVKLTILLNLLVYSTLPHK) are Lumenal-facing. The helical transmembrane segment at 393–413 (EFRFIFPLQPLFILISSFGLL) threads the bilayer. Residues 414–423 (RLDRDYWKRL) are Cytoplasmic-facing. The helical transmembrane segment at 424 to 444 (SGLKSLLWLVPFVSVFIALLL) threads the bilayer. The Lumenal portion of the chain corresponds to 445–616 (DTFHESGSIE…DYSDIPAADI (172 aa)).

This sequence belongs to the glycosyltransferase 22 family. PIGB subfamily.

The protein localises to the endoplasmic reticulum membrane. It functions in the pathway glycolipid biosynthesis; glycosylphosphatidylinositol-anchor biosynthesis. Its function is as follows. Mannosyltransferase involved in glycosylphosphatidylinositol-anchor biosynthesis. Transfers the third mannose to Man2-GlcN-acyl-PI during GPI precursor assembly. The protein is GPI mannosyltransferase 3 (GPI10) of Saccharomyces cerevisiae (strain ATCC 204508 / S288c) (Baker's yeast).